A 445-amino-acid polypeptide reads, in one-letter code: Methylphloroacetophenone oxidase (445 aa).

The chain crosses the membrane as a helical span at residues 25–45; the sequence is VLSIALIGVACAISIRSILYV. A glycan (N-linked (GlcNAc...) asparagine) is linked at N51.

This sequence belongs to the cytochrome P450 family.

It localises to the membrane. It functions in the pathway secondary metabolite biosynthesis. Methylphloroacetophenone oxidase; part of the gene cluster that mediates the biosynthesis of usnic acid, a dibenzofuran lichen product possessing a broad spectrum of biological activities. Two genes, mpas and mpao, comprise the usnic acid biosynthetic gene cluster with a single post-PKS enzyme, the methylphloracetophenone oxidase (mpao). The methylphloroacetophenone synthase (mpas) is a non-reducing polyketide synthase that produces methylphloracetophenone from acetate via a methylated tetraketide intermediate. The methylphloroacetophenone oxidase then carries out the oxidative dimerization of methylphloracetophenone to usnic acid. The protein is Methylphloroacetophenone oxidase of Cladonia uncialis (Cup lichen).